The chain runs to 602 residues: uncharacterized protein (602 aa).

An MCM domain is found at 271-472 (IIDILADILI…RDEEVAKYIF (202 aa)). 315–322 (TEVGIDKT) contributes to the ATP binding site.

The protein belongs to the MCM family.

This is an uncharacterized protein from Methanocaldococcus jannaschii (strain ATCC 43067 / DSM 2661 / JAL-1 / JCM 10045 / NBRC 100440) (Methanococcus jannaschii).